The sequence spans 984 residues: Ubiquitin conjugation factor E4 ufd-2 (984 aa).

The 74-residue stretch at 909-982 (DVPEEFKDPI…QEWICQKRNS (74 aa)) folds into the U-box domain.

This sequence belongs to the ubiquitin conjugation factor E4 family. Forms a complex composed of deubiquitinating enzyme atx-3, E4 ubiquitin-protein ligase ufd-2 and cdc-48.1; within the complex interacts with atx-3 and cdc-48.1 (via DDDLYN motif). Forms a complex composed of cdc-48.1, myosin chaperone unc-45, ubiquitin-protein ligases ufd-2 and chn-1; the complex targets myosin chaperone unc-45 for proteasomal degradation; within the complex interacts with cdc-48.1 (via DDDLYN motif), chn-1 and unc-45. Forms a complex composed of unc-45 and myosin heavy chain B unc-54; the complex targets unfolded unc-54 for proteasomal degradation; within the complex interacts with unc-45 (via TPR domain) and unc-54. Interacts with cdc-48.2 (via DDDLYN motif). In terms of tissue distribution, expressed in the germline (at protein level).

It is found in the cytoplasm. Its subcellular location is the nucleus membrane. It localises to the nucleus. The protein resides in the nucleolus. The catalysed reaction is S-ubiquitinyl-[E2 ubiquitin-conjugating enzyme]-L-cysteine + [acceptor protein]-L-lysine = [E2 ubiquitin-conjugating enzyme]-L-cysteine + N(6)-ubiquitinyl-[acceptor protein]-L-lysine.. Its pathway is protein modification; protein ubiquitination. Its function is as follows. Acts as an E4 ubiquitin ligase mediating the assembly of polyubiquitin chains on substrates ubiquitinated by another E3 ubiquitin ligase. The elongation of preexisting ubiquitin chains preferentially targets ubiquitin 'Lys-29' and 'Lys-48' residues. Also functions as an E3 ligase in conjunction with specific E1 and E2 ligases. Probably by regulating protein ubiquitination at DNA damage repair sites, coordinates DNA double-strand-break repair and apoptosis in the germline. Required for germline apoptosis in response to DNA damage downstream of cep-1. Involved in the resolution of DNA-repair sites by promoting the release of rad-51 from DNA damage foci. In association with protein-ligase chn-1, acts as an E3/E4 ligase to poly-ubiquitinate lysine residues in the UCS domain of myosin chaperone unc-45. By targeting myosin chaperone unc-45 for proteasomal degradation, regulates myosin assembly in body wall muscles in association with cdc-48.1 and chn-1. However, in a contrasting study, acts as an E3 ligase, independently of chn-1, to poly-ubiquitinate unc-45 without promoting unc-45 proteasomal degradation. Instead, uses unc-45 as an adapter protein to recruit and poly-ubiquitinate unfolded myosin heavy chain B unc-54. The sequence is that of Ubiquitin conjugation factor E4 ufd-2 from Caenorhabditis elegans.